A 413-amino-acid chain; its full sequence is Histidine--tRNA ligase (413 aa).

This sequence belongs to the class-II aminoacyl-tRNA synthetase family. Homodimer.

The protein resides in the cytoplasm. It catalyses the reaction tRNA(His) + L-histidine + ATP = L-histidyl-tRNA(His) + AMP + diphosphate + H(+). The chain is Histidine--tRNA ligase (hisS) from Rickettsia prowazekii (strain Madrid E).